We begin with the raw amino-acid sequence, 87 residues long: Small ribosomal subunit protein bS20 (87 aa).

A disordered region spans residues 1–26 (MANTKSALKRIRQTATRTARNRAVTS). Low complexity predominate over residues 13–23 (QTATRTARNRA).

The protein belongs to the bacterial ribosomal protein bS20 family.

Binds directly to 16S ribosomal RNA. The protein is Small ribosomal subunit protein bS20 of Akkermansia muciniphila (strain ATCC BAA-835 / DSM 22959 / JCM 33894 / BCRC 81048 / CCUG 64013 / CIP 107961 / Muc).